The following is a 370-amino-acid chain: Peptide chain release factor 2 (370 aa).

An N5-methylglutamine modification is found at Gln249.

Belongs to the prokaryotic/mitochondrial release factor family. In terms of processing, methylated by PrmC. Methylation increases the termination efficiency of RF2.

The protein localises to the cytoplasm. Functionally, peptide chain release factor 2 directs the termination of translation in response to the peptide chain termination codons UGA and UAA. The protein is Peptide chain release factor 2 of Kosmotoga olearia (strain ATCC BAA-1733 / DSM 21960 / TBF 19.5.1).